The chain runs to 110 residues: MFGKGGMGNLMKQAQMMQERMQKMQEEVAKMEVTGESGAGMVKITITGSHNVRRVTIDPSLLQDDDQEMLEDLIAAAFNDAVRRAEEQNKAKMAEITGGMQLPPGFKMPF.

The protein belongs to the YbaB/EbfC family. As to quaternary structure, homodimer.

The protein resides in the cytoplasm. Its subcellular location is the nucleoid. Functionally, binds to DNA and alters its conformation. May be involved in regulation of gene expression, nucleoid organization and DNA protection. This is Nucleoid-associated protein Tola_2216 from Tolumonas auensis (strain DSM 9187 / NBRC 110442 / TA 4).